Here is a 502-residue protein sequence, read N- to C-terminus: Mannitol 2-dehydrogenase (502 aa).

37-48 (IVHIGVGGFHRA) contacts NAD(+).

Belongs to the mannitol dehydrogenase family. As to quaternary structure, monomer.

It carries out the reaction D-mannitol + NAD(+) = D-fructose + NADH + H(+). In terms of biological role, catalyzes the NAD(H)-dependent interconversion of D-fructose and D-mannitol in the mannitol metabolic pathway. In Emericella nidulans (strain FGSC A4 / ATCC 38163 / CBS 112.46 / NRRL 194 / M139) (Aspergillus nidulans), this protein is Mannitol 2-dehydrogenase.